A 571-amino-acid polypeptide reads, in one-letter code: Streptolysin O (571 aa).

Positions 1–33 are cleaved as a signal peptide; sequence MSNKKTFKKYSRVAGLLTAALIIGNLVTANAES. Residues 30 to 108 form a disordered region; sequence NAESNKQNTA…KKSEEDHTEE (79 aa). Low complexity predominate over residues 37–48; it reads NTASTETTTTNE. Composition is skewed to basic and acidic residues over residues 50-68 and 79-108; these read PKPE…KTDD and APKE…HTEE. The next 4 membrane-spanning stretches (beta stranded) occupy residues 260–273, 280–289, 358–367, and 375–387; these read KSQI…NSKI, IDFKSISKGE, SNDVEAAFSA, and KTNG…LENS. The Conserved undecapeptide motif lies at 529–539; the sequence is ECTGLAWEWWR. Positions 561-562 match the Cholesterol binding motif; that stretch reads TL.

Belongs to the cholesterol-dependent cytolysin family. In terms of assembly, homooligomeric pore complex of 35 to 50 subunits; when inserted in the host membrane.

It localises to the secreted. The protein resides in the host cell membrane. Functionally, a cholesterol-dependent toxin that causes cytolysis by forming pores in cholesterol containing host membranes. After binding to target membranes, the protein undergoes a major conformation change, leading to its insertion in the host membrane and formation of an oligomeric pore complex. Cholesterol is required for binding to host membranes, membrane insertion and pore formation; cholesterol binding is mediated by a Thr-Leu pair in the C-terminus. Can be reversibly inactivated by oxidation. This Streptococcus pyogenes serotype M3 (strain ATCC BAA-595 / MGAS315) protein is Streptolysin O (slo).